A 158-amino-acid polypeptide reads, in one-letter code: NAD(P)H-quinone oxidoreductase subunit J, chloroplastic (158 aa).

The protein belongs to the complex I 30 kDa subunit family. As to quaternary structure, NDH is composed of at least 16 different subunits, 5 of which are encoded in the nucleus.

The protein localises to the plastid. The protein resides in the chloroplast thylakoid membrane. It carries out the reaction a plastoquinone + NADH + (n+1) H(+)(in) = a plastoquinol + NAD(+) + n H(+)(out). It catalyses the reaction a plastoquinone + NADPH + (n+1) H(+)(in) = a plastoquinol + NADP(+) + n H(+)(out). In terms of biological role, NDH shuttles electrons from NAD(P)H:plastoquinone, via FMN and iron-sulfur (Fe-S) centers, to quinones in the photosynthetic chain and possibly in a chloroplast respiratory chain. The immediate electron acceptor for the enzyme in this species is believed to be plastoquinone. Couples the redox reaction to proton translocation, and thus conserves the redox energy in a proton gradient. The sequence is that of NAD(P)H-quinone oxidoreductase subunit J, chloroplastic from Liriodendron tulipifera (Tuliptree).